Here is a 117-residue protein sequence, read N- to C-terminus: Small ribosomal subunit protein bS6 (117 aa).

The segment at 92–117 is disordered; it reads KVDEHPEGPSIQMQKREERDNRRERR. A compositionally biased stretch (basic and acidic residues) spans 105–117; that stretch reads QKREERDNRRERR.

It belongs to the bacterial ribosomal protein bS6 family.

Functionally, binds together with bS18 to 16S ribosomal RNA. The chain is Small ribosomal subunit protein bS6 from Dinoroseobacter shibae (strain DSM 16493 / NCIMB 14021 / DFL 12).